Consider the following 1048-residue polypeptide: Cysteine-rich motor neuron 1 protein (1048 aa).

The first 46 residues, 1 to 46 (MYLAAVSAGRRRPGGDGGGGGGGWHLAAAGWLLLLALLLGQPGTRA), serve as a signal peptide directing secretion. In terms of domain architecture, IGFBP N-terminal spans 47-124 (LVCLPCDESK…EYEVGVCEDE (78 aa)). Topologically, residues 47-952 (LVCLPCDESK…HPSEDASVSS (906 aa)) are extracellular. Disulfide bonds link Cys-49–Cys-72, Cys-52–Cys-74, Cys-57–Cys-75, and Cys-63–Cys-78. Residue Asn-83 is glycosylated (N-linked (GlcNAc...) asparagine). Disulfide bonds link Cys-86-Cys-102 and Cys-96-Cys-121. The Cell attachment site signature appears at 326–328 (RGD). 2 consecutive VWFC domains span residues 346–403 (PTCI…PVCE) and 413–469 (AGCY…PVCE). Antistasin-like domains are found at residues 481-510 (CELLVNCTLTEKDCIYSFKLDQNGCRICQC), 517-544 (CTGLISGCSLDCSFGFQTDAHNCEICQC), 551-576 (CKPIVCDKYCPFGYLKNKHGCEICRC), and 579-604 (CPEMPCGKICPMGFQQNSHGCVICKC). N-linked (GlcNAc...) asparagine glycosylation is present at Asn-486. VWFC domains lie at 618–675 (GSCL…PSCP) and 689–747 (SICH…PQCP). The N-linked (GlcNAc...) asparagine glycan is linked to Asn-758. VWFC domains follow at residues 763-821 (SYCK…PYCI) and 829-886 (VVCH…PMCP). The Cell attachment site motif lies at 904–906 (RGD). A glycan (N-linked (GlcNAc...) asparagine) is linked at Asn-913. Residues 953-973 (VALVTVPITIALLVIIVFLLI) form a helical membrane-spanning segment. Topologically, residues 974–1048 (NQKKQWIPVS…LQADNFYQTV (75 aa)) are cytoplasmic.

It is found in the membrane. Its function is as follows. May play a role in CNS development by interacting with growth factors implicated in motor neuron differentiation and survival. The chain is Cysteine-rich motor neuron 1 protein (CRIM1) from Gallus gallus (Chicken).